Here is a 134-residue protein sequence, read N- to C-terminus: Calvin cycle protein CP12-3, chloroplastic (134 aa).

Residues 1 to 21 (MISGSATASHGRVLLPSQRER) form a disordered region. The transit peptide at 1–42 (MISGSATASHGRVLLPSQRERRPVSTGSNILRFRETVPRQFS) directs the protein to the chloroplast. 2 cysteine pairs are disulfide-bonded: Cys-78-Cys-87 and Cys-120-Cys-129.

This sequence belongs to the CP12 family. Monomer. Component of a complex that contains two dimers of PRK, two tetramers of GAPDH and CP12. CP12 associates with GAPDH, causing its conformation to change. This GAPDH/CP12 complex binds PRK to form a half-complex (one unit). This unit probably dimerizes due partially to interactions between the enzymes of each unit. Post-translationally, contains two disulfide bonds; only the oxidized protein, with two disulfide bonds, is active in complex formation. The C-terminal disulfide is involved in the interaction with GAPDH and the N-terminal disulfide mediates the binding of PRK with this binary complex. Mostly expressed, at low levels, in stems and, to a lesser extent, in leaves and roots.

The protein localises to the plastid. The protein resides in the chloroplast. Acts as a linker essential in the assembly of a core complex of PRK/GAPDH. Coordinates the reversible inactivation of chloroplast enzymes GAPDH and PRK during darkness in photosynthetic tissues. The polypeptide is Calvin cycle protein CP12-3, chloroplastic (CP12-3) (Arabidopsis thaliana (Mouse-ear cress)).